A 664-amino-acid chain; its full sequence is UvrABC system protein B (664 aa).

The region spanning 23–180 (EGLNRGMRFQ…EKLAKIGYQR (158 aa)) is the Helicase ATP-binding domain. Position 36–43 (36–43 (GVTGSGKT)) interacts with ATP. The short motif at 89 to 112 (YYDYYQPEAYIPTKDLYIEKNADI) is the Beta-hairpin element. The Helicase C-terminal domain maps to 426-588 (QVDDLINEIV…ITPRSIVKPL (163 aa)). The UVR domain occupies 622–657 (EEYVALLEEEMYRAASELRYEDAAALRDELFRVKET).

It belongs to the UvrB family. In terms of assembly, forms a heterotetramer with UvrA during the search for lesions. Interacts with UvrC in an incision complex.

It localises to the cytoplasm. Its function is as follows. The UvrABC repair system catalyzes the recognition and processing of DNA lesions. A damage recognition complex composed of 2 UvrA and 2 UvrB subunits scans DNA for abnormalities. Upon binding of the UvrA(2)B(2) complex to a putative damaged site, the DNA wraps around one UvrB monomer. DNA wrap is dependent on ATP binding by UvrB and probably causes local melting of the DNA helix, facilitating insertion of UvrB beta-hairpin between the DNA strands. Then UvrB probes one DNA strand for the presence of a lesion. If a lesion is found the UvrA subunits dissociate and the UvrB-DNA preincision complex is formed. This complex is subsequently bound by UvrC and the second UvrB is released. If no lesion is found, the DNA wraps around the other UvrB subunit that will check the other stand for damage. The polypeptide is UvrABC system protein B (Thermotoga neapolitana (strain ATCC 49049 / DSM 4359 / NBRC 107923 / NS-E)).